Consider the following 362-residue polypeptide: Tryptophan 2,3-dioxygenase (362 aa).

Substrate is bound by residues 40–44 (FIIVH) and Arg-111. His-297 serves as a coordination point for heme. Thr-311 contributes to the substrate binding site.

This sequence belongs to the tryptophan 2,3-dioxygenase family. As to quaternary structure, homotetramer. It depends on heme as a cofactor.

It catalyses the reaction L-tryptophan + O2 = N-formyl-L-kynurenine. It participates in amino-acid degradation; L-tryptophan degradation via kynurenine pathway; L-kynurenine from L-tryptophan: step 1/2. Heme-dependent dioxygenase that catalyzes the oxidative cleavage of the L-tryptophan (L-Trp) pyrrole ring and converts L-tryptophan to N-formyl-L-kynurenine. Catalyzes the oxidative cleavage of the indole moiety. This Alteromonas mediterranea (strain DSM 17117 / CIP 110805 / LMG 28347 / Deep ecotype) protein is Tryptophan 2,3-dioxygenase.